The primary structure comprises 87 residues: Small ribosomal subunit protein uS17 (87 aa).

Belongs to the universal ribosomal protein uS17 family. As to quaternary structure, part of the 30S ribosomal subunit.

One of the primary rRNA binding proteins, it binds specifically to the 5'-end of 16S ribosomal RNA. This chain is Small ribosomal subunit protein uS17, found in Chromobacterium violaceum (strain ATCC 12472 / DSM 30191 / JCM 1249 / CCUG 213 / NBRC 12614 / NCIMB 9131 / NCTC 9757 / MK).